A 380-amino-acid polypeptide reads, in one-letter code: Cytochrome b (380 aa).

4 helical membrane passes run 34–54 (FGSLLGICLLTQILTGLLLAT), 78–99 (WLIRNLHANGASFFFICIYLHI), 114–134 (WNTGVILLLALMATAFVGYVL), and 179–199 (FFALHFLLPFMIAGLAFIHLT). Heme b is bound by residues H84 and H98. H183 and H197 together coordinate heme b. Residue H202 coordinates a ubiquinone. 4 consecutive transmembrane segments (helical) span residues 227–247 (LKDILGFIIMFLPLTTLALFS), 289–309 (LGGVLALAASVLVLFLTPLLH), 321–341 (LSQLLFWTLVANLLILTWVGS), and 348–368 (FIIIGQLASLAYFTILLLLFP).

This sequence belongs to the cytochrome b family. As to quaternary structure, the cytochrome bc1 complex contains 11 subunits: 3 respiratory subunits (MT-CYB, CYC1 and UQCRFS1), 2 core proteins (UQCRC1 and UQCRC2) and 6 low-molecular weight proteins (UQCRH/QCR6, UQCRB/QCR7, UQCRQ/QCR8, UQCR10/QCR9, UQCR11/QCR10 and a cleavage product of UQCRFS1). This cytochrome bc1 complex then forms a dimer. Heme b serves as cofactor.

The protein resides in the mitochondrion inner membrane. In terms of biological role, component of the ubiquinol-cytochrome c reductase complex (complex III or cytochrome b-c1 complex) that is part of the mitochondrial respiratory chain. The b-c1 complex mediates electron transfer from ubiquinol to cytochrome c. Contributes to the generation of a proton gradient across the mitochondrial membrane that is then used for ATP synthesis. This Uria lomvia (Thick-billed murre) protein is Cytochrome b (MT-CYB).